The following is a 394-amino-acid chain: Glycerol-3-phosphate dehydrogenase [NAD(+)] 2 (394 aa).

NAD(+) contacts are provided by residues 41–46, K152, and A185; that span reads GSGNWG. K152 serves as a coordination point for substrate. K243 serves as the catalytic Proton acceptor. NAD(+)-binding residues include R308 and Q337. Position 308–309 (308–309) interacts with substrate; the sequence is RN.

Belongs to the NAD-dependent glycerol-3-phosphate dehydrogenase family.

The catalysed reaction is sn-glycerol 3-phosphate + NAD(+) = dihydroxyacetone phosphate + NADH + H(+). The polypeptide is Glycerol-3-phosphate dehydrogenase [NAD(+)] 2 (gpd2) (Cyberlindnera jadinii (Torula yeast)).